The primary structure comprises 214 residues: Probable nicotinate-nucleotide adenylyltransferase (214 aa).

It belongs to the NadD family.

It catalyses the reaction nicotinate beta-D-ribonucleotide + ATP + H(+) = deamido-NAD(+) + diphosphate. The protein operates within cofactor biosynthesis; NAD(+) biosynthesis; deamido-NAD(+) from nicotinate D-ribonucleotide: step 1/1. Its function is as follows. Catalyzes the reversible adenylation of nicotinate mononucleotide (NaMN) to nicotinic acid adenine dinucleotide (NaAD). This Pseudomonas fluorescens (strain ATCC BAA-477 / NRRL B-23932 / Pf-5) protein is Probable nicotinate-nucleotide adenylyltransferase.